We begin with the raw amino-acid sequence, 1043 residues long: Phosphatidylinositol 4,5-bisphosphate 3-kinase catalytic subunit delta isoform (1043 aa).

The PI3K-ABD domain maps to Glu16–Glu105. Positions Asn187–His278 constitute a PI3K-RBD domain. Positions Asp287–Ser312 are disordered. One can recognise a C2 PI3K-type domain in the interval Leu319–Pro476. Residues Arg496–Gly673 enclose the PIK helical domain. A Phosphotyrosine modification is found at Tyr523. One can recognise a PI3K/PI4K catalytic domain in the interval Cys744–Trp1026. Residues Phe750 to Lys756 form a G-loop region. Residues Gly889–Asn897 are catalytic loop. The activation loop stretch occupies residues His908–Thr934. Ser1038 is subject to Phosphoserine; by autocatalysis.

This sequence belongs to the PI3/PI4-kinase family. Heterodimer of a catalytic subunit PIK3CD and a p85 regulatory subunit (PIK3R1, PIK3R2 or PIK3R3). Interacts with ERAS and HRAS. Post-translationally, autophosphorylation on Ser-1038 results in the almost complete inactivation of the lipid kinase activity. Abundantly expressed in adult mouse spleen as well as in testis. Isoform 1 is expressed in spleen and lung (at protein level). Isoform 1 is expressed predominantly in leukocytes.

The protein localises to the cytoplasm. The catalysed reaction is a 1,2-diacyl-sn-glycero-3-phospho-(1D-myo-inositol-4,5-bisphosphate) + ATP = a 1,2-diacyl-sn-glycero-3-phospho-(1D-myo-inositol-3,4,5-trisphosphate) + ADP + H(+). The enzyme catalyses a 1,2-diacyl-sn-glycero-3-phospho-(1D-myo-inositol) + ATP = a 1,2-diacyl-sn-glycero-3-phospho-(1D-myo-inositol-3-phosphate) + ADP + H(+). It catalyses the reaction 1-octadecanoyl-2-(5Z,8Z,11Z,14Z)-eicosatetraenoyl-sn-glycero-3-phospho-1D-myo-inositol 4,5-bisphosphate + ATP = 1-octadecanoyl-2-(5Z,8Z,11Z,14Z-eicosatetraenoyl)-sn-glycero-3-phospho-(1D-myo-inositol 3,4,5-triphosphate) + ADP + H(+). Its pathway is phospholipid metabolism; phosphatidylinositol phosphate biosynthesis. Its activity is regulated as follows. Activated by growth factors and cytokine receptors through a tyrosine-kinase-dependent mechanism. Activated by RAS. IC87114 inhibits lipid kinase activity and is selective in cells at doses up to 5-10 uM. Among other effects, IC87114 reduces allergic responses, prevents the recruitment of antigen-specific T cells into target tissue, and affects natural killer cell chemotaxis. Functionally, phosphoinositide-3-kinase (PI3K) phosphorylates phosphatidylinositol (PI) and its phosphorylated derivatives at position 3 of the inositol ring to produce 3-phosphoinositides. Uses ATP and PtdIns(4,5)P2 (phosphatidylinositol 4,5-bisphosphate) to generate phosphatidylinositol 3,4,5-trisphosphate (PIP3). PIP3 plays a key role by recruiting PH domain-containing proteins to the membrane, including AKT1 and PDPK1, activating signaling cascades involved in cell growth, survival, proliferation, motility and morphology. Mediates immune responses. Plays a role in B-cell development, proliferation, migration, and function. Required for B-cell receptor (BCR) signaling. Mediates B-cell proliferation response to anti-IgM, anti-CD40 and IL4 stimulation. Promotes cytokine production in response to TLR4 and TLR9. Required for antibody class switch mediated by TLR9. Involved in the antigen presentation function of B-cells. Involved in B-cell chemotaxis in response to CXCL13 and sphingosine 1-phosphate (S1P). Required for proliferation, signaling and cytokine production of naive, effector and memory T-cells. Required for T-cell receptor (TCR) signaling. Mediates TCR signaling events at the immune synapse. Activation by TCR leads to antigen-dependent memory T-cell migration and retention to antigenic tissues. Together with PIK3CG participates in T-cell development. Contributes to T-helper cell expansion and differentiation. Required for T-cell migration mediated by homing receptors SELL/CD62L, CCR7 and S1PR1 and antigen dependent recruitment of T-cells. Together with PIK3CG is involved in natural killer (NK) cell development and migration towards the sites of inflammation. Participates in NK cell receptor activation. Plays a role in NK cell maturation and cytokine production. Together with PIK3CG is involved in neutrophil chemotaxis and extravasation. Together with PIK3CG participates in neutrophil respiratory burst. Plays important roles in mast-cell development and mast cell mediated allergic response. Involved in stem cell factor (SCF)-mediated proliferation, adhesion and migration. Required for allergen-IgE-induced degranulation and cytokine release. The lipid kinase activity is required for its biological function. The chain is Phosphatidylinositol 4,5-bisphosphate 3-kinase catalytic subunit delta isoform (Pik3cd) from Mus musculus (Mouse).